The primary structure comprises 178 residues: Oligoribonuclease (178 aa).

In terms of domain architecture, Exonuclease spans 7–168; sequence LIWIDLEMTG…DDIRESIAEL (162 aa). Tyr128 is a catalytic residue.

Belongs to the oligoribonuclease family.

The protein resides in the cytoplasm. Its function is as follows. 3'-to-5' exoribonuclease specific for small oligoribonucleotides. The sequence is that of Oligoribonuclease from Pseudomonas syringae pv. syringae (strain B728a).